Here is a 212-residue protein sequence, read N- to C-terminus: Uridine kinase (212 aa).

13–20 contacts ATP; it reads GASASGKS.

This sequence belongs to the uridine kinase family.

The protein localises to the cytoplasm. It catalyses the reaction uridine + ATP = UMP + ADP + H(+). The catalysed reaction is cytidine + ATP = CMP + ADP + H(+). Its pathway is pyrimidine metabolism; CTP biosynthesis via salvage pathway; CTP from cytidine: step 1/3. It participates in pyrimidine metabolism; UMP biosynthesis via salvage pathway; UMP from uridine: step 1/1. This Shewanella baltica (strain OS223) protein is Uridine kinase.